Here is a 346-residue protein sequence, read N- to C-terminus: UPF0053 protein sll1254 (346 aa).

The next 4 membrane-spanning stretches (helical) occupy residues 1–21 (MLEIVAAIFIVLLGSGICSCA), 58–78 (IGTIVVLNNIFNIVGSITIGA), 87–107 (AWMGVFSGILTLLIIVFGEII), and 121–141 (LLIAIPVRFLTLIFTPLVWLI). One can recognise a CNNM transmembrane domain in the interval 1 to 179 (MLEIVAAIFI…YKEGVIEGDE (179 aa)). 2 CBS domains span residues 198 to 259 (MTPR…GYKT) and 263 to 320 (LARP…IVDE).

Belongs to the UPF0053 family.

Its subcellular location is the cell membrane. The polypeptide is UPF0053 protein sll1254 (Synechocystis sp. (strain ATCC 27184 / PCC 6803 / Kazusa)).